Reading from the N-terminus, the 88-residue chain is UPF0367 protein Synpcc7942_1638 (88 aa).

This sequence belongs to the UPF0367 family.

This is UPF0367 protein Synpcc7942_1638 from Synechococcus elongatus (strain ATCC 33912 / PCC 7942 / FACHB-805) (Anacystis nidulans R2).